We begin with the raw amino-acid sequence, 331 residues long: UDP-GalNAc:beta-1,3-N-acetylgalactosaminyltransferase 1 (331 aa).

Residues 1 to 20 lie on the Cytoplasmic side of the membrane; sequence MAPALPITLPSKMSLRSLKW. A helical; Signal-anchor for type II membrane protein transmembrane segment spans residues 21–43; sequence SLLLLSLLSFLVMWYLSLPHYNV. Residues 44 to 331 are Lumenal-facing; it reads IERVNWMYFY…VMLRNTTCHY (288 aa). N-linked (GlcNAc...) asparagine glycans are attached at residues N72, N154, N198, N212, and N326.

It belongs to the glycosyltransferase 31 family. The cofactor is Mg(2+).

Its subcellular location is the golgi apparatus membrane. The catalysed reaction is a globoside Gb3Cer (d18:1(4E)) + UDP-N-acetyl-alpha-D-galactosamine = a globoside Gb4Cer (d18:1(4E)) + UDP + H(+). It participates in protein modification; protein glycosylation. Functionally, transfers N-acetylgalactosamine onto globotriaosylceramide. Plays a critical role in preimplantation stage embryonic development. The sequence is that of UDP-GalNAc:beta-1,3-N-acetylgalactosaminyltransferase 1 (B3GALNT1) from Sus scrofa (Pig).